An 833-amino-acid chain; its full sequence is Urease (833 aa).

Residues 395–833 (GALDVHVHYI…LPLTKRYFVY (439 aa)) form the Urease domain. Ni(2+) is bound by residues His-400 and His-402. Urea is bound by residues His-402 and Ala-433. Lys-483 provides a ligand contact to Ni(2+). N6-carboxylysine is present on Lys-483. Urea contacts are provided by His-485 and His-512. Ni(2+) is bound by residues His-512 and His-538. His-586 functions as the Proton donor in the catalytic mechanism. A Ni(2+)-binding site is contributed by Asp-626. Urea is bound at residue Ala-629.

The protein in the C-terminal section; belongs to the metallo-dependent hydrolases superfamily. Urease alpha subunit family. As to quaternary structure, homohexamer. It depends on Ni(2+) as a cofactor. Post-translationally, carboxylation allows a single lysine to coordinate two nickel ions.

The enzyme catalyses urea + 2 H2O + H(+) = hydrogencarbonate + 2 NH4(+). It participates in nitrogen metabolism; urea degradation; CO(2) and NH(3) from urea (urease route): step 1/1. The urease accessory proteins URE4, URE6 and URE7 are required for urease activity, URE7 supplying nickel for the functional urease. Functionally, plays a nutritional role via nitrogen acquisition in the environment. Contributes to the central nervous system invasion by enhancing yeast sequestration within microcapillary beds (such as within the brain) during hematogenous spread, thereby facilitating blood-to-brain invasion by C.neoformans. Affects fitness within the mammalian phagosome, promoting non-lytic exocytosis while delaying intracellular replication and thus reducing phagolysosomal membrane damage, events that could facilitate cryptococcal dissemination when transported inside macrophages. Urease activity is also associated with the regulation of key intracellular metabolic pathways, including melanin biosynthesis, polyamine biosynthesis, as well as intracellular levels of proline and reactive oxygen species. This Cryptococcus neoformans var. neoformans serotype D (strain B-3501A) (Filobasidiella neoformans) protein is Urease.